We begin with the raw amino-acid sequence, 303 residues long: tRNA pseudouridine synthase A (303 aa).

Catalysis depends on aspartate 59, which acts as the Nucleophile. Residue tyrosine 128 participates in substrate binding.

It belongs to the tRNA pseudouridine synthase TruA family. As to quaternary structure, homodimer.

It carries out the reaction uridine(38/39/40) in tRNA = pseudouridine(38/39/40) in tRNA. Functionally, formation of pseudouridine at positions 38, 39 and 40 in the anticodon stem and loop of transfer RNAs. This is tRNA pseudouridine synthase A from Bifidobacterium longum (strain DJO10A).